The primary structure comprises 97 residues: Theromacin (97 aa).

Residues 1-22 form the signal peptide; that stretch reads MELKSGLSILLCFGICIAVINA. Intrachain disulfides connect Cys24-Cys31, Cys46-Cys50, Cys53-Cys95, Cys61-Cys69, and Cys79-Cys81.

In terms of tissue distribution, coelomic liquid (at protein level). Expressed in large fat cells in contact with coelomic cavities, in intestinal epithelia and at the epidermis level.

It is found in the secreted. In terms of biological role, has a bactericidal activity. Active against M.luteus. No activity toward E.coli and F.oxysporum. The chain is Theromacin from Theromyzon tessulatum (Duck leech).